Here is a 445-residue protein sequence, read N- to C-terminus: Glutamyl-tRNA(Gln) amidotransferase subunit D (445 aa).

An Asparaginase/glutaminase domain is found at 93–425 (SEIKIISTGG…EKIRSLMISN (333 aa)). Active-site residues include T103, T179, D180, and K258.

This sequence belongs to the asparaginase 1 family. GatD subfamily. In terms of assembly, heterodimer of GatD and GatE.

The catalysed reaction is L-glutamyl-tRNA(Gln) + L-glutamine + ATP + H2O = L-glutaminyl-tRNA(Gln) + L-glutamate + ADP + phosphate + H(+). Functionally, allows the formation of correctly charged Gln-tRNA(Gln) through the transamidation of misacylated Glu-tRNA(Gln) in organisms which lack glutaminyl-tRNA synthetase. The reaction takes place in the presence of glutamine and ATP through an activated gamma-phospho-Glu-tRNA(Gln). The GatDE system is specific for glutamate and does not act on aspartate. The sequence is that of Glutamyl-tRNA(Gln) amidotransferase subunit D from Saccharolobus islandicus (strain M.16.27) (Sulfolobus islandicus).